Reading from the N-terminus, the 495-residue chain is Putative aldehyde dehydrogenase AldA (495 aa).

NAD(+) is bound at residue 212 to 218 (GKGSESG). Catalysis depends on residues Glu256 and Cys290.

Belongs to the aldehyde dehydrogenase family.

It carries out the reaction an aldehyde + NAD(+) + H2O = a carboxylate + NADH + 2 H(+). This Staphylococcus aureus (strain Mu50 / ATCC 700699) protein is Putative aldehyde dehydrogenase AldA (aldA).